A 1303-amino-acid chain; its full sequence is DNA-directed RNA polymerase subunit beta' (1303 aa).

Residues C60, C62, C75, and C78 each coordinate Zn(2+). Mg(2+) contacts are provided by D535, D537, and D539. Positions 876, 953, 960, and 963 each coordinate Zn(2+).

It belongs to the RNA polymerase beta' chain family. In terms of assembly, the RNAP catalytic core consists of 2 alpha, 1 beta, 1 beta' and 1 omega subunit. When a sigma factor is associated with the core the holoenzyme is formed, which can initiate transcription. The cofactor is Mg(2+). It depends on Zn(2+) as a cofactor.

The enzyme catalyses RNA(n) + a ribonucleoside 5'-triphosphate = RNA(n+1) + diphosphate. DNA-dependent RNA polymerase catalyzes the transcription of DNA into RNA using the four ribonucleoside triphosphates as substrates. The protein is DNA-directed RNA polymerase subunit beta' of Saccharopolyspora erythraea (strain ATCC 11635 / DSM 40517 / JCM 4748 / NBRC 13426 / NCIMB 8594 / NRRL 2338).